We begin with the raw amino-acid sequence, 376 residues long: Natterin-2 (376 aa).

A signal peptide spans 1–18 (MNLSVLLVTLLLLSWTSA). The propeptide occupies 19–27 (EKDLKVRVA).

It belongs to the natterin family. Post-translationally, contains 4 disulfide bonds. In terms of tissue distribution, expressed by the venom gland.

It localises to the secreted. Its activity is regulated as follows. Inhibited by tissue-kallikrein inhibitor TKI and trasylol. Plasma kallikrein inhibitor PKSI527 and classical inhibitors of serine-, metallo-, thiol- or aspartate-peptidases evokes a minor inhibition of the peptide digestion. Shows nociceptive, edema-inducing and kininogenase activity with release of kallidin from low molecular weight kininogen. The cleavage occurs at Met-Lys bonds. This chain is Natterin-2, found in Thalassophryne nattereri (Copper Joe toadfish).